A 326-amino-acid polypeptide reads, in one-letter code: tRNA dimethylallyltransferase (326 aa).

18 to 25 (GPTASGKS) lines the ATP pocket. 20–25 (TASGKS) provides a ligand contact to substrate. Interaction with substrate tRNA stretches follow at residues 43–46 (DSMQ) and 167–171 (QRIAR).

The protein belongs to the IPP transferase family. In terms of assembly, monomer. It depends on Mg(2+) as a cofactor.

It carries out the reaction adenosine(37) in tRNA + dimethylallyl diphosphate = N(6)-dimethylallyladenosine(37) in tRNA + diphosphate. Functionally, catalyzes the transfer of a dimethylallyl group onto the adenine at position 37 in tRNAs that read codons beginning with uridine, leading to the formation of N6-(dimethylallyl)adenosine (i(6)A). The protein is tRNA dimethylallyltransferase of Rhodospirillum rubrum (strain ATCC 11170 / ATH 1.1.1 / DSM 467 / LMG 4362 / NCIMB 8255 / S1).